Reading from the N-terminus, the 145-residue chain is Large ribosomal subunit protein uL16 (145 aa).

Over residues methionine 1–methionine 17 the composition is skewed to basic residues. The interval methionine 1 to threonine 22 is disordered.

Belongs to the universal ribosomal protein uL16 family. Part of the 50S ribosomal subunit.

In terms of biological role, binds 23S rRNA and is also seen to make contacts with the A and possibly P site tRNAs. This is Large ribosomal subunit protein uL16 from Ruminiclostridium cellulolyticum (strain ATCC 35319 / DSM 5812 / JCM 6584 / H10) (Clostridium cellulolyticum).